The following is a 312-amino-acid chain: Pyridoxal kinase (312 aa).

Methionine 1 is modified (N-acetylmethionine). Pyridoxal 5'-phosphate is bound by residues serine 12 and threonine 47. Residues serine 12 and threonine 47 each coordinate pyridoxamine. Phosphoserine is present on serine 59. Aspartate 113 is a K(+) binding site. Residue tyrosine 127 participates in pyridoxal 5'-phosphate binding. Threonine 148 contacts K(+). Residue asparagine 150 coordinates ADP. An ATP-binding site is contributed by asparagine 150. Serine 164 bears the Phosphoserine mark. Residue threonine 186 participates in K(+) binding. Position 186–187 (186–187) interacts with ADP; the sequence is TS. 186–187 provides a ligand contact to ATP; sequence TS. The residue at position 213 (serine 213) is a Phosphoserine. ADP contacts are provided by residues 223-226 and 233-234; these read MHKV and TG. Residues 223–226 and 233–234 each bind ATP; these read MHKV and TG. 232-235 is a binding site for pyridoxal 5'-phosphate; the sequence is GTGD. Position 235 (aspartate 235) interacts with pyridoxamine. Residue aspartate 235 is the Proton acceptor of the active site. A Phosphoserine modification is found at serine 285.

Belongs to the pyridoxine kinase family. As to quaternary structure, homodimer. Zn(2+) is required as a cofactor. Mg(2+) serves as cofactor. Ubiquitous.

It is found in the cytoplasm. The protein resides in the cytosol. It carries out the reaction pyridoxal + ATP = pyridoxal 5'-phosphate + ADP + H(+). The catalysed reaction is pyridoxamine + ATP = pyridoxamine 5'-phosphate + ADP + H(+). The enzyme catalyses pyridoxine + ATP = pyridoxine 5'-phosphate + ADP + H(+). It participates in cofactor metabolism; pyridoxal 5'-phosphate salvage; pyridoxal 5'-phosphate from pyridoxal: step 1/1. The protein operates within cofactor metabolism; pyridoxal 5'-phosphate salvage; pyridoxine 5'-phosphate from pyridoxine: step 1/1. It functions in the pathway cofactor metabolism; pyridoxal 5'-phosphate salvage; pyridoxamine 5'-phosphate from pyridoxamine: step 1/1. Activated by K(+). Activity is increased in the presence of Na(+). In terms of biological role, catalyzes the phosphorylation of the dietary vitamin B6 vitamers pyridoxal (PL), pyridoxine (PN) and pyridoxamine (PM) to form pyridoxal 5'-phosphate (PLP), pyridoxine 5'-phosphate (PNP) and pyridoxamine 5'-phosphate (PMP), respectively. PLP is the active form of vitamin B6, and acts as a cofactor for over 140 different enzymatic reactions. In Ovis aries (Sheep), this protein is Pyridoxal kinase (PDXK).